A 524-amino-acid chain; its full sequence is Cytochrome P450 4F11 (524 aa).

Residues 15 to 37 (AASPWLLLLLVGGSWLLARVLAW) form a helical membrane-spanning segment. Residues cysteine 45 and cysteine 260 each carry the 4-hydroxynonenal-conjugated cysteine modification. Residue histidine 261 is modified to 4-hydroxynonenal-conjugated histidine. Glutamate 328 contacts heme. Position 347 is a 4-hydroxynonenal-conjugated histidine (histidine 347). Cysteine 354 is subject to 4-hydroxynonenal-conjugated cysteine. At lysine 451 the chain carries 4-hydroxynonenal-conjugated lysine. Cysteine 468 lines the heme pocket.

The protein belongs to the cytochrome P450 family. Heme is required as a cofactor. In terms of processing, 4-hydroxynonenal conjugation impairs substrate binding and the long-chain fatty acid omega-monooxygenase activity. In terms of tissue distribution, expressed mainly in human liver, followed by kidney, heart, and skeletal muscle.

The protein resides in the endoplasmic reticulum membrane. It localises to the microsome membrane. It carries out the reaction an organic molecule + reduced [NADPH--hemoprotein reductase] + O2 = an alcohol + oxidized [NADPH--hemoprotein reductase] + H2O + H(+). The catalysed reaction is an omega-methyl-long-chain fatty acid + reduced [NADPH--hemoprotein reductase] + O2 = an omega-hydroxy-long-chain fatty acid + oxidized [NADPH--hemoprotein reductase] + H2O + H(+). The enzyme catalyses dodecanoate + reduced [NADPH--hemoprotein reductase] + O2 = 12-hydroxydodecanoate + oxidized [NADPH--hemoprotein reductase] + H2O + H(+). It catalyses the reaction hexadecanoate + reduced [NADPH--hemoprotein reductase] + O2 = 16-hydroxyhexadecanoate + oxidized [NADPH--hemoprotein reductase] + H2O + H(+). It carries out the reaction (9Z)-octadecenoate + reduced [NADPH--hemoprotein reductase] + O2 = 18-hydroxy-(9Z)-octadecenoate + oxidized [NADPH--hemoprotein reductase] + H2O + H(+). The catalysed reaction is (5Z,8Z,11Z,14Z)-eicosatetraenoate + reduced [NADPH--hemoprotein reductase] + O2 = 20-hydroxy-(5Z,8Z,11Z,14Z)-eicosatetraenoate + oxidized [NADPH--hemoprotein reductase] + H2O + H(+). The enzyme catalyses (4Z,7Z,10Z,13Z,16Z,19Z)-docosahexaenoate + reduced [NADPH--hemoprotein reductase] + O2 = 22-hydroxy-(4Z,7Z,10Z,13Z,16Z,19Z)-docosahexaenoate + oxidized [NADPH--hemoprotein reductase] + H2O + H(+). It catalyses the reaction 8-hydroxy-(5Z,9E,11Z,14Z)-eicosatetraenoate + reduced [NADPH--hemoprotein reductase] + O2 = 8,20-dihydroxy-(5Z,9E,11Z,14Z)-eicosatetraenoate + oxidized [NADPH--hemoprotein reductase] + H2O + H(+). It carries out the reaction 3-hydroxyhexadecanoate + reduced [NADPH--hemoprotein reductase] + O2 = 3,16-dihydroxyhexadecanoate + oxidized [NADPH--hemoprotein reductase] + H2O + H(+). The catalysed reaction is 3-hydroxyoctadecanoate + reduced [NADPH--hemoprotein reductase] + O2 = 3,18-dihydroxyoctadecanoate + oxidized [NADPH--hemoprotein reductase] + H2O + H(+). The enzyme catalyses phylloquinone + reduced [NADPH--hemoprotein reductase] + O2 = omega-hydroxyphylloquinone + oxidized [NADPH--hemoprotein reductase] + H2O + H(+). It catalyses the reaction menaquinone-4 + reduced [NADPH--hemoprotein reductase] + O2 = omega-hydroxymenaquinone-4 + oxidized [NADPH--hemoprotein reductase] + H2O + H(+). It carries out the reaction 2-hexyl-5-pentylresorcinol + reduced [NADPH--hemoprotein reductase] + O2 = 2-hexyl-5-(5-hydroxypentyl)resorcinol + oxidized [NADPH--hemoprotein reductase] + H2O + H(+). The catalysed reaction is 2-hexyl-5-heptylresorcinol + reduced [NADPH--hemoprotein reductase] + O2 = 2-hexyl-5-(7-hydroxyheptyl)resorcinol + oxidized [NADPH--hemoprotein reductase] + H2O + H(+). The enzyme catalyses 12-hydroxy-(5Z,8Z,10E,14Z)-eicosatetraenoate + reduced [NADPH--hemoprotein reductase] + O2 = 12,20-dihydroxy-(5Z,8Z,10E,14Z)-eicosatetraenoate + oxidized [NADPH--hemoprotein reductase] + H2O + H(+). It catalyses the reaction 15-hydroxy-(5Z,8Z,11Z,13E)-eicosatetraenoate + reduced [NADPH--hemoprotein reductase] + O2 = 15,20-dihydroxy-(5Z,8Z,11Z,13E)-eicosatetraenoate + oxidized [NADPH--hemoprotein reductase] + H2O + H(+). It functions in the pathway lipid metabolism; arachidonate metabolism. The protein operates within lipid metabolism; oxylipin biosynthesis. Its pathway is cofactor degradation; phylloquinone degradation. It participates in xenobiotic degradation. With respect to regulation, inhibition of the long-chain fatty acid omega-monooxygenase activity by 4-hydroxynonenal (4-HNE) conjugation. Functionally, a cytochrome P450 monooxygenase involved in the metabolism of various endogenous substrates, including fatty acids and their oxygenated derivatives (oxylipins). Mechanistically, uses molecular oxygen inserting one oxygen atom into a substrate, and reducing the second into a water molecule, with two electrons provided by NADPH via cytochrome P450 reductase (CPR; NADPH-ferrihemoprotein reductase). Catalyzes with high efficiency the oxidation of the terminal carbon (omega-oxidation) of 3-hydroxy fatty acids, such as 3-hydroxyhexadecanoic and 3-hydroxyoctadecanoic acids, likely participating in the biosynthesis of long-chain 3-hydroxydicarboxylic acids. Omega-hydroxylates and inactivates phylloquinone (vitamin K1), and menaquinone-4 (MK-4, a form of vitamin K2), both acting as cofactors in blood coagulation. Metabolizes with low efficiciency fatty acids, including (5Z,8Z,11Z,14Z)-eicosatetraenoic acid (arachidonate) and its oxygenated metabolite 8-hydroxyeicosatetraenoic acid (8-HETE). Catalyzes N- and O-demethylation of drugs such as erythromycin, benzphetamine, ethylmorphine, chlorpromazine, imipramine and verapamil. Catalyzes the oxidation of dialkylresorcinol 2. This Homo sapiens (Human) protein is Cytochrome P450 4F11.